The following is a 940-amino-acid chain: Leucine--tRNA ligase, mitochondrial (940 aa).

The 'HIGH' region motif lies at 54–64 (PYPSGALHMGH). The 'KMSKS' region signature appears at 638–642 (TINKL). Lys-641 contributes to the ATP binding site. The interval 724 to 744 (KEQHQHQQQQHQQPLPSSEFN) is disordered.

Belongs to the class-I aminoacyl-tRNA synthetase family.

It localises to the mitochondrion. The enzyme catalyses tRNA(Leu) + L-leucine + ATP = L-leucyl-tRNA(Leu) + AMP + diphosphate. In Dictyostelium discoideum (Social amoeba), this protein is Leucine--tRNA ligase, mitochondrial (mleuS).